We begin with the raw amino-acid sequence, 627 residues long: Translation factor GUF1, mitochondrial (627 aa).

Residues 1 to 16 constitute a mitochondrion transit peptide; it reads MSLAWSAGRAWSRQSY. One can recognise a tr-type G domain in the interval 40-221; that stretch reads ERYRNFCIVA…AVIERIPHPV (182 aa). GTP is bound by residues 49–56, 114–118, and 168–171; these read AHIDHGKS, DTPGH, and NKID.

The protein belongs to the TRAFAC class translation factor GTPase superfamily. Classic translation factor GTPase family. LepA subfamily.

It is found in the mitochondrion inner membrane. The catalysed reaction is GTP + H2O = GDP + phosphate + H(+). Functionally, promotes mitochondrial protein synthesis. May act as a fidelity factor of the translation reaction, by catalyzing a one-codon backward translocation of tRNAs on improperly translocated ribosomes. Binds to mitochondrial ribosomes in a GTP-dependent manner. This chain is Translation factor GUF1, mitochondrial, found in Fusarium vanettenii (strain ATCC MYA-4622 / CBS 123669 / FGSC 9596 / NRRL 45880 / 77-13-4) (Fusarium solani subsp. pisi).